The chain runs to 249 residues: 3-deoxy-D-manno-octulosonic acid kinase (249 aa).

Asp-175 is a catalytic residue.

The protein belongs to the protein kinase superfamily. KdkA/RfaP family.

The protein resides in the cell inner membrane. The enzyme catalyses an alpha-Kdo-(2-&gt;6)-lipid IVA + ATP = a 4-O-phospho-alpha-Kdo-(2-&gt;6)-lipid IVA + ADP + H(+). It participates in bacterial outer membrane biogenesis; LPS core biosynthesis. Its function is as follows. Catalyzes the ATP-dependent phosphorylation of the 3-deoxy-D-manno-octulosonic acid (Kdo) residue in Kdo-lipid IV(A) at the 4-OH position. The protein is 3-deoxy-D-manno-octulosonic acid kinase of Xanthomonas oryzae pv. oryzae (strain PXO99A).